The following is a 343-amino-acid chain: Farnesyl pyrophosphate synthase (343 aa).

Isopentenyl diphosphate is bound by residues lysine 49, arginine 52, and glutamine 87. Residues aspartate 94 and aspartate 98 each contribute to the Mg(2+) site. Arginine 103 is a binding site for dimethylallyl diphosphate. Arginine 104 lines the isopentenyl diphosphate pocket. Residues lysine 191, threonine 192, glutamine 230, lysine 247, and lysine 256 each contribute to the dimethylallyl diphosphate site.

This sequence belongs to the FPP/GGPP synthase family. It depends on Mg(2+) as a cofactor. As to expression, expressed both in apical and sub-apical cells of glandular secretory trichomes.

The protein resides in the cytoplasm. It is found in the nucleus. The catalysed reaction is isopentenyl diphosphate + dimethylallyl diphosphate = (2E)-geranyl diphosphate + diphosphate. It carries out the reaction isopentenyl diphosphate + (2E)-geranyl diphosphate = (2E,6E)-farnesyl diphosphate + diphosphate. It functions in the pathway isoprenoid biosynthesis; farnesyl diphosphate biosynthesis; farnesyl diphosphate from geranyl diphosphate and isopentenyl diphosphate: step 1/1. It participates in sesquiterpene biosynthesis. The protein operates within isoprenoid biosynthesis; geranyl diphosphate biosynthesis; geranyl diphosphate from dimethylallyl diphosphate and isopentenyl diphosphate: step 1/1. Involved in the biosynthesis of the antimalarial endoperoxide artemisinin. Catalyzes the sequential condensation of isopentenyl pyrophosphate with the allylic pyrophosphates, dimethylallyl pyrophosphate, and then with the resultant geranylpyrophosphate to the ultimate product farnesyl pyrophosphate. Promotes anti-malarial and antimicrobial (toward Gram-positive bacteria B.subtilis and S.aureus) activities of plant crude extract probably by triggering artemisinin levels. The protein is Farnesyl pyrophosphate synthase of Artemisia annua (Sweet wormwood).